The primary structure comprises 356 residues: 5-formaminoimidazole-4-carboxamide-1-(beta)-D-ribofuranosyl 5'-monophosphate synthetase 1 (356 aa).

5-amino-1-(5-phospho-beta-D-ribosyl)imidazole-4-carboxamide-binding residues include His-27 and Ser-94. Residues 101–333 (TENFAEMAVP…YADLIQEDLS (233 aa)) enclose the ATP-grasp domain. ATP is bound by residues 145–196 (PRDI…TRYY) and Glu-226. Asn-255 lines the 5-amino-1-(5-phospho-beta-D-ribosyl)imidazole-4-carboxamide pocket. Glu-293 and Glu-306 together coordinate Mg(2+).

This sequence belongs to the phosphohexose mutase family. Requires Mg(2+) as cofactor. The cofactor is Mn(2+).

It catalyses the reaction 5-amino-1-(5-phospho-beta-D-ribosyl)imidazole-4-carboxamide + formate + ATP = 5-formamido-1-(5-phospho-D-ribosyl)imidazole-4-carboxamide + ADP + phosphate. It functions in the pathway purine metabolism; IMP biosynthesis via de novo pathway; 5-formamido-1-(5-phospho-D-ribosyl)imidazole-4-carboxamide from 5-amino-1-(5-phospho-D-ribosyl)imidazole-4-carboxamide (formate route): step 1/1. Catalyzes the ATP- and formate-dependent formylation of 5-aminoimidazole-4-carboxamide-1-beta-d-ribofuranosyl 5'-monophosphate (AICAR) to 5-formaminoimidazole-4-carboxamide-1-beta-d-ribofuranosyl 5'-monophosphate (FAICAR) in the absence of folates. In Methanosarcina mazei (strain ATCC BAA-159 / DSM 3647 / Goe1 / Go1 / JCM 11833 / OCM 88) (Methanosarcina frisia), this protein is 5-formaminoimidazole-4-carboxamide-1-(beta)-D-ribofuranosyl 5'-monophosphate synthetase 1.